A 131-amino-acid polypeptide reads, in one-letter code: EG45-like domain containing protein (131 aa).

The first 24 residues, 1–24, serve as a signal peptide directing secretion; sequence MGVGTKVLVITTMAICLISSAAYA. An Expansin-like EG45; incomplete domain is found at 27–131; the sequence is GTATFYTPPY…GKIKIEFNQA (105 aa). C73 and C85 are disulfide-bonded.

Expressed in the outer layer of xylem and the vascular cambial zone of roots, in shoot cambium, but not in leaves.

It localises to the secreted. Functionally, might have a systemic role in water and solute homeostasis. Has no expansin-like activity. The protein is EG45-like domain containing protein (CjBAp12) of Citrus jambhiri (Rough lemon).